The chain runs to 509 residues: Cobyric acid synthase (509 aa).

One can recognise a GATase cobBQ-type domain in the interval 262-459 (EIKVGIIKLP…IHGIFENDIW (198 aa)). The Nucleophile role is filled by cysteine 343. Histidine 451 is a catalytic residue.

It belongs to the CobB/CobQ family. CobQ subfamily.

The protein operates within cofactor biosynthesis; adenosylcobalamin biosynthesis. In terms of biological role, catalyzes amidations at positions B, D, E, and G on adenosylcobyrinic A,C-diamide. NH(2) groups are provided by glutamine, and one molecule of ATP is hydrogenolyzed for each amidation. In Prochlorococcus marinus (strain MIT 9312), this protein is Cobyric acid synthase.